The following is a 618-amino-acid chain: 1-deoxy-D-xylulose-5-phosphate synthase (618 aa).

Thiamine diphosphate contacts are provided by residues histidine 76 and 117 to 119; that span reads GHS. Aspartate 148 provides a ligand contact to Mg(2+). Residues 149–150, asparagine 177, tyrosine 284, and glutamate 366 contribute to the thiamine diphosphate site; that span reads GA. Asparagine 177 contacts Mg(2+).

Belongs to the transketolase family. DXPS subfamily. In terms of assembly, homodimer. The cofactor is Mg(2+). Requires thiamine diphosphate as cofactor.

It catalyses the reaction D-glyceraldehyde 3-phosphate + pyruvate + H(+) = 1-deoxy-D-xylulose 5-phosphate + CO2. It participates in metabolic intermediate biosynthesis; 1-deoxy-D-xylulose 5-phosphate biosynthesis; 1-deoxy-D-xylulose 5-phosphate from D-glyceraldehyde 3-phosphate and pyruvate: step 1/1. Catalyzes the acyloin condensation reaction between C atoms 2 and 3 of pyruvate and glyceraldehyde 3-phosphate to yield 1-deoxy-D-xylulose-5-phosphate (DXP). The sequence is that of 1-deoxy-D-xylulose-5-phosphate synthase from Dechloromonas aromatica (strain RCB).